Reading from the N-terminus, the 76-residue chain is UPF0235 protein MRA_1997 (76 aa).

Belongs to the UPF0235 family.

The sequence is that of UPF0235 protein MRA_1997 from Mycobacterium tuberculosis (strain ATCC 25177 / H37Ra).